Consider the following 616-residue polypeptide: Protein cereblon (616 aa).

Disordered stretches follow at residues 1–39 (MDEE…DDSV), 63–137 (FGPS…AMPR), and 182–220 (SQER…DIDM). A compositionally biased stretch (low complexity) spans 11 to 32 (AQEQEVAGSAGEAAAGPSGAEV). Residues 96-107 (SEEDIVLDDGTE) show a composition bias toward acidic residues. A compositionally biased stretch (basic and acidic residues) spans 183-192 (QERRRSRNSD). Acidic residues predominate over residues 194–203 (VSPEAEDDEL). Over residues 206–215 (HPPPPPPRPP) the composition is skewed to pro residues. The Lon N-terminal domain occupies 257 to 482 (HMLIFLHQYI…LIGGILKEET (226 aa)). The CULT domain maps to 481-590 (ETLFYCRYCN…LAGSSVRIGK (110 aa)). 4 residues coordinate Zn(2+): C486, C489, C555, and C558.

The protein belongs to the CRBN family. Likely a component of a DCX (DDB1-CUL4-X-box) protein ligase complex. May interact with pic/DDB1. In terms of processing, ubiquitinated.

It is found in the nucleus. It participates in protein modification; protein ubiquitination. Its function is as follows. Substrate recognition component of a DCX (DDB1-CUL4-X-box) E3 protein ligase complex that mediates the ubiquitination and subsequent proteasomal degradation of target proteins. Has an essential role in mediating growth by negatively regulating insulin signaling. It also has a role in maintaining presynaptic function in the neuromuscular junction synapses of third-instar larvae. This chain is Protein cereblon, found in Drosophila pseudoobscura pseudoobscura (Fruit fly).